We begin with the raw amino-acid sequence, 183 residues long: ADP-ribosylation factor 3 (183 aa).

Gly-2 carries N-myristoyl glycine lipidation. Residues 24–31, 67–71, and 126–129 contribute to the GTP site; these read GLDKAGKT, DVGGQ, and NKQD.

This sequence belongs to the small GTPase superfamily. Arf family. Interacts with RUD3.

It localises to the golgi apparatus. In terms of biological role, GTP-binding protein involved in protein trafficking; may modulate vesicle budding and uncoating within the Golgi apparatus. The sequence is that of ADP-ribosylation factor 3 (ARF3) from Saccharomyces cerevisiae (strain ATCC 204508 / S288c) (Baker's yeast).